The primary structure comprises 342 residues: MTTIFAIETSCDESAAAIVRGRTVVASIIASQIDVHRLTGGVVPEVASREHLQALGGVIAACFAEGGLGWADIDAVAFTCAPGLVGSLLMGSMAAKTLALVHARPLVGIHHLEGHIYSAFLSDPALEPPFLCLLVSGGHTSLVAVEDHGRYRILGRTRDDAVGEAYDKVARVLGLGYPGGPAIDKLAQRGDPRAFALPGGRVESPFDTSFSGLKTAVLRLAEKHRLQRLPIDRADLAASFQRTVVETLAERVELALAHTGYDTVVVAGGVSANRGLRERLGQAGPYRAVFPPMHFCTDNAAMIACAGVARFERGFRSSLDLPVQSRLSLEACDSLYQCLPVP.

Positions 111 and 115 each coordinate Fe cation. Substrate is bound by residues leucine 134–glycine 138, aspartate 167, glycine 180, aspartate 184, and asparagine 273. Aspartate 298 serves as a coordination point for Fe cation.

The protein belongs to the KAE1 / TsaD family. Fe(2+) is required as a cofactor.

Its subcellular location is the cytoplasm. The enzyme catalyses L-threonylcarbamoyladenylate + adenosine(37) in tRNA = N(6)-L-threonylcarbamoyladenosine(37) in tRNA + AMP + H(+). Functionally, required for the formation of a threonylcarbamoyl group on adenosine at position 37 (t(6)A37) in tRNAs that read codons beginning with adenine. Is involved in the transfer of the threonylcarbamoyl moiety of threonylcarbamoyl-AMP (TC-AMP) to the N6 group of A37, together with TsaE and TsaB. TsaD likely plays a direct catalytic role in this reaction. This Gloeobacter violaceus (strain ATCC 29082 / PCC 7421) protein is tRNA N6-adenosine threonylcarbamoyltransferase.